The sequence spans 568 residues: DNA ligase 2 (568 aa).

E254 contacts ATP. The active-site N6-AMP-lysine intermediate is K256. The ATP site is built by R261, R276, E306, F346, R425, and K431.

This sequence belongs to the ATP-dependent DNA ligase family. Mg(2+) serves as cofactor.

The catalysed reaction is ATP + (deoxyribonucleotide)n-3'-hydroxyl + 5'-phospho-(deoxyribonucleotide)m = (deoxyribonucleotide)n+m + AMP + diphosphate.. In terms of biological role, DNA ligase that seals nicks in double-stranded DNA during DNA replication, DNA recombination and DNA repair. This chain is DNA ligase 2, found in Methanosarcina acetivorans (strain ATCC 35395 / DSM 2834 / JCM 12185 / C2A).